Consider the following 311-residue polypeptide: Pyrimidine-specific ribonucleoside hydrolase RihA (311 aa).

Histidine 240 is a catalytic residue.

This sequence belongs to the IUNH family. RihA subfamily.

In terms of biological role, hydrolyzes cytidine or uridine to ribose and cytosine or uracil, respectively. This chain is Pyrimidine-specific ribonucleoside hydrolase RihA, found in Salmonella agona (strain SL483).